The primary structure comprises 423 residues: Putative gustatory receptor 97a (423 aa).

At 1-31 (MRFLRRQTRRLRSIWQRSLPVRFRRGKLHTQ) the chain is on the cytoplasmic side. The chain crosses the membrane as a helical span at residues 32 to 52 (LVTICLYATVFLNILYGVYLG). The Extracellular segment spans residues 53–65 (RFSFRRKKFVFSK). A helical membrane pass occupies residues 66-86 (GLTIYSLFVATFFALFYIWNI). The Cytoplasmic portion of the chain corresponds to 87–99 (YNEISTGQINLRD). Residues 100-120 (TIGIYCYMNVCVCLFNYVTQW) form a helical membrane-spanning segment. Residues 121-152 (EKTLQIIRFQNSVPLFKVLDSLDISAMIVWRA) are Extracellular-facing. A helical membrane pass occupies residues 153–173 (FIYGLLKIVFCPLITYITLIL). Topologically, residues 174 to 200 (YHRRSISESQWTSVTTTKTMLPLIVSN) are cytoplasmic. The chain crosses the membrane as a helical span at residues 201-221 (QINNCFFGGLVLANLIFAAVN). The Extracellular portion of the chain corresponds to 222-278 (RKLHGIVKEANMLQSPVQMNLHKPYYRMRRFCELADLLDELARKYGFTASRSKNYLR). A helical membrane pass occupies residues 279-299 (FTDWSMVLSMLMNLLGITMGC). Topologically, residues 300 to 317 (YNQYLAIADHYINEEPFD) are cytoplasmic. A helical transmembrane segment spans residues 318–338 (LFLAIVLVVFLAVPFLELVMV). Residues 339–423 (ARISNQTLTR…SDLTLRFSLK (85 aa)) lie on the Extracellular side of the membrane. N-linked (GlcNAc...) asparagine glycosylation is found at N343 and N393.

This sequence belongs to the insect chemoreceptor superfamily. Gustatory receptor (GR) family. Gr22e subfamily. As to expression, in larvae, is expressed in neurons of the terminal external chemosensory organ.

The protein resides in the cell membrane. Functionally, probable gustatory receptor which mediates acceptance or avoidance behavior, depending on its substrates. This chain is Putative gustatory receptor 97a (Gr97a), found in Drosophila melanogaster (Fruit fly).